The primary structure comprises 377 residues: MQTLLDTAHCRLTLYRYPRQSQDPLQAWDAADEYLINTLAETPLEQAGPVIIMNDGFGALAAFLHPHAPVCVSDSYISERATLANLAENELDPHAIRLQDALAPLPLAPALVVIKVSKYQALLEQQLLALRAVVTPATRVIAAGKAKDIHSSTLALFEKYLGPTRTSLAWKKARLIHCEPQAMQPELANPYPTVWPLEGTGMLIHNHANVFSRTSLDIGARFMLDNLPVHSARKVIDLGCGNGVLGLALLAKDPEVEVTFIDESHMAVASARLNVEHNLPDALPRARFMVNNCLDDVAVGAADRILCNPPFHQLQAITDHIAWQMFSDAHRVLPQGGELWIVGNRHLDYHNKLKRLFANAQVVASNSKFVILKAIKR.

The protein belongs to the methyltransferase superfamily. RlmG family.

It is found in the cytoplasm. The catalysed reaction is guanosine(1835) in 23S rRNA + S-adenosyl-L-methionine = N(2)-methylguanosine(1835) in 23S rRNA + S-adenosyl-L-homocysteine + H(+). Its function is as follows. Specifically methylates the guanine in position 1835 (m2G1835) of 23S rRNA. This is Ribosomal RNA large subunit methyltransferase G from Aeromonas salmonicida (strain A449).